The sequence spans 162 residues: uncharacterized protein (162 aa).

This is an uncharacterized protein from Picosynechococcus sp. (strain ATCC 27264 / PCC 7002 / PR-6) (Agmenellum quadruplicatum).